A 107-amino-acid chain; its full sequence is Putative antitoxin VapB5 (107 aa).

The next 2 helical transmembrane spans lie at 3–23 (GPVI…ILLA) and 65–85 (LIIL…AYLY).

The protein resides in the cell membrane. In terms of biological role, possibly the antitoxin component of a type II toxin-antitoxin (TA) system. Its cognate toxin is VapC5 (Potential). The chain is Putative antitoxin VapB5 (vapB5) from Methanocaldococcus jannaschii (strain ATCC 43067 / DSM 2661 / JAL-1 / JCM 10045 / NBRC 100440) (Methanococcus jannaschii).